A 407-amino-acid polypeptide reads, in one-letter code: Imidazolonepropionase (407 aa).

Positions 74 and 76 each coordinate Fe(3+). Residues histidine 74 and histidine 76 each coordinate Zn(2+). 4-imidazolone-5-propanoate contacts are provided by arginine 83, tyrosine 146, and histidine 179. Tyrosine 146 provides a ligand contact to N-formimidoyl-L-glutamate. Histidine 244 is a binding site for Fe(3+). Histidine 244 contributes to the Zn(2+) binding site. Residue glutamine 247 coordinates 4-imidazolone-5-propanoate. Residue aspartate 319 participates in Fe(3+) binding. Aspartate 319 contacts Zn(2+). Asparagine 321 and glycine 323 together coordinate N-formimidoyl-L-glutamate. Threonine 324 lines the 4-imidazolone-5-propanoate pocket.

This sequence belongs to the metallo-dependent hydrolases superfamily. HutI family. It depends on Zn(2+) as a cofactor. The cofactor is Fe(3+).

Its subcellular location is the cytoplasm. The enzyme catalyses 4-imidazolone-5-propanoate + H2O = N-formimidoyl-L-glutamate. It participates in amino-acid degradation; L-histidine degradation into L-glutamate; N-formimidoyl-L-glutamate from L-histidine: step 3/3. In terms of biological role, catalyzes the hydrolytic cleavage of the carbon-nitrogen bond in imidazolone-5-propanoate to yield N-formimidoyl-L-glutamate. It is the third step in the universal histidine degradation pathway. This Salmonella paratyphi A (strain ATCC 9150 / SARB42) protein is Imidazolonepropionase.